A 144-amino-acid polypeptide reads, in one-letter code: 3-hydroxyacyl-[acyl-carrier-protein] dehydratase FabZ (144 aa).

The active site involves H51.

Belongs to the thioester dehydratase family. FabZ subfamily.

It is found in the cytoplasm. The enzyme catalyses a (3R)-hydroxyacyl-[ACP] = a (2E)-enoyl-[ACP] + H2O. Functionally, involved in unsaturated fatty acids biosynthesis. Catalyzes the dehydration of short chain beta-hydroxyacyl-ACPs and long chain saturated and unsaturated beta-hydroxyacyl-ACPs. The chain is 3-hydroxyacyl-[acyl-carrier-protein] dehydratase FabZ from Clostridium botulinum (strain Okra / Type B1).